We begin with the raw amino-acid sequence, 126 residues long: Protein ApaG (126 aa).

Positions 2–126 (SALDDSIRVE…FRLALPGLLH (125 aa)) constitute an ApaG domain.

The chain is Protein ApaG from Shewanella sp. (strain MR-7).